Consider the following 390-residue polypeptide: Chorismate synthase 2 (390 aa).

2 residues coordinate NADP(+): Arg-39 and Arg-45. Residues 132 to 134, 253 to 254, Gly-298, 313 to 317, and Arg-339 contribute to the FMN site; these read RSS, NA, and KPIPT.

This sequence belongs to the chorismate synthase family. In terms of assembly, homotetramer. The cofactor is FMNH2.

It carries out the reaction 5-O-(1-carboxyvinyl)-3-phosphoshikimate = chorismate + phosphate. It participates in metabolic intermediate biosynthesis; chorismate biosynthesis; chorismate from D-erythrose 4-phosphate and phosphoenolpyruvate: step 7/7. Catalyzes the anti-1,4-elimination of the C-3 phosphate and the C-6 proR hydrogen from 5-enolpyruvylshikimate-3-phosphate (EPSP) to yield chorismate, which is the branch point compound that serves as the starting substrate for the three terminal pathways of aromatic amino acid biosynthesis. This reaction introduces a second double bond into the aromatic ring system. In Bacillus cereus (strain ZK / E33L), this protein is Chorismate synthase 2.